Here is a 508-residue protein sequence, read N- to C-terminus: Potassium/proton antiporter CemA (508 aa).

Transmembrane regions (helical) follow at residues 66–86 (LFIIYWSLLEYRISLCFLNLL), 282–302 (YQALASIQYIGCLIFLPWIIS), 386–406 (ILHLLTGMICFTTLGALFILG), 433–453 (ILLLTDLCIGFHSPHGWEVVI), and 468–488 (IISCFVSTFPVILDTVSKYWI).

Belongs to the CemA family.

The protein resides in the plastid. The protein localises to the chloroplast inner membrane. It carries out the reaction K(+)(in) + H(+)(out) = K(+)(out) + H(+)(in). In terms of biological role, contributes to K(+)/H(+) antiport activity by supporting proton efflux to control proton extrusion and homeostasis in chloroplasts in a light-dependent manner to modulate photosynthesis. Prevents excessive induction of non-photochemical quenching (NPQ) under continuous-light conditions. Indirectly promotes efficient inorganic carbon uptake into chloroplasts. The chain is Potassium/proton antiporter CemA from Anthoceros angustus (Hornwort).